The primary structure comprises 1501 residues: Pleiotropic ABC efflux transporter of multiple drugs CDR1 (1501 aa).

Residues M1–N30 are disordered. Residues M1 to S513 are Cytoplasmic-facing. An NBD1 region spans residues S2–P512. A compositionally biased stretch (basic and acidic residues) spans S8–I18. Positions L150–Q404 constitute an ABC transporter 1 domain. The helical transmembrane segment at I514–Y534 threads the bilayer. Residues N535–A548 are Extracellular-facing. The helical transmembrane segment at A549–F569 threads the bilayer. Topologically, residues E570–E597 are cytoplasmic. Residues L598–F618 traverse the membrane as a helical segment. Topologically, residues R619 to P622 are extracellular. The helical transmembrane segment at G623 to F643 threads the bilayer. Residues R644–S654 are Cytoplasmic-facing. A helical membrane pass occupies residues G655 to I675. The Extracellular portion of the chain corresponds to P676–N764. The chain crosses the membrane as a helical span at residues L765–F785. The Cytoplasmic portion of the chain corresponds to N786–G1195. Residues N786 to G1195 are NBD2. The ABC transporter 2 domain maps to F859–A1103. Residue G895–T902 participates in ATP binding. The stretch at R1137–D1164 forms a coiled coil. A helical membrane pass occupies residues Y1196–F1216. Residues K1217–M1229 lie on the Extracellular side of the membrane. The chain crosses the membrane as a helical span at residues F1230–F1250. Over V1251–E1280 the chain is Cytoplasmic. The helical transmembrane segment at I1281–L1301 threads the bilayer. Over Y1302–R1314 the chain is Extracellular. The helical transmembrane segment at G1315–L1335 threads the bilayer. The Cytoplasmic segment spans residues C1336–T1355. The helical transmembrane segment at M1356–F1376 threads the bilayer. The Extracellular portion of the chain corresponds to M1377–N1466. A helical transmembrane segment spans residues F1467–L1487. At A1488–K1501 the chain is on the cytoplasmic side.

This sequence belongs to the ABC transporter superfamily.

Its subcellular location is the cell membrane. Disulfiram reverses CDR1-mediated drug resistance by interaction with both ATP and substrate-binding sites of the transporter and may be useful for antifungal therapy. Functionally, pleiotropic ABC efflux transporter that confers resistance to numerous chemicals including anisomycin, cycloheximide, fluconazole, miconazole, ketoconazole, itriconazole, nystatin, terbinafine, amorolfine, brefeldin A, amphotericin B, fluphenazine, as well as estrogen. Plays a role in farnesol-induced apoptotic process through glutathione efflux activity. Mediates in-to-out translocation of membrane phospholipids including aminophospholipids and thus regulates asymmetric distribution of phosphatidylethanolamine. Exhibits nucleoside triphosphatase activity. This is Pleiotropic ABC efflux transporter of multiple drugs CDR1 (CDR1) from Candida albicans (strain SC5314 / ATCC MYA-2876) (Yeast).